We begin with the raw amino-acid sequence, 386 residues long: GTPase Obg (386 aa).

The 159-residue stretch at Met1–Leu159 folds into the Obg domain. The tract at residues Asn127 to Gly147 is disordered. A compositionally biased stretch (polar residues) spans Arg129–Thr145. Residues Ala160–Ile333 enclose the OBG-type G domain. Residues Gly166 to Ser173, Phe191 to Val195, Asp213 to Gly216, Asn283 to Asp286, and Ser314 to Ala316 each bind GTP. Residues Ser173 and Thr193 each coordinate Mg(2+).

It belongs to the TRAFAC class OBG-HflX-like GTPase superfamily. OBG GTPase family. As to quaternary structure, monomer. The cofactor is Mg(2+).

It localises to the cytoplasm. An essential GTPase which binds GTP, GDP and possibly (p)ppGpp with moderate affinity, with high nucleotide exchange rates and a fairly low GTP hydrolysis rate. Plays a role in control of the cell cycle, stress response, ribosome biogenesis and in those bacteria that undergo differentiation, in morphogenesis control. The chain is GTPase Obg from Escherichia coli (strain UTI89 / UPEC).